Consider the following 274-residue polypeptide: Diaminopimelate epimerase (274 aa).

The substrate site is built by Asn11, Gln44, and Asn64. The active-site Proton donor is the Cys73. Substrate is bound by residues 74–75 (GN), Asn157, Asn190, and 208–209 (ER). The Proton acceptor role is filled by Cys217. 218-219 (GS) serves as a coordination point for substrate.

Belongs to the diaminopimelate epimerase family. In terms of assembly, homodimer.

The protein localises to the cytoplasm. The catalysed reaction is (2S,6S)-2,6-diaminopimelate = meso-2,6-diaminopimelate. The protein operates within amino-acid biosynthesis; L-lysine biosynthesis via DAP pathway; DL-2,6-diaminopimelate from LL-2,6-diaminopimelate: step 1/1. Functionally, catalyzes the stereoinversion of LL-2,6-diaminopimelate (L,L-DAP) to meso-diaminopimelate (meso-DAP), a precursor of L-lysine and an essential component of the bacterial peptidoglycan. The sequence is that of Diaminopimelate epimerase from Shigella boydii serotype 18 (strain CDC 3083-94 / BS512).